The following is a 477-amino-acid chain: Bifunctional protein HldE (477 aa).

The segment at 1–318 (MKVTLPEFER…ENAVRGRADT (318 aa)) is ribokinase. N6-acetyllysine is present on Lys-179. 195–198 (NLSE) is a binding site for ATP. The active site involves Asp-264. The interval 344 to 477 (MTNGVFDILH…IKKIQQDKKG (134 aa)) is cytidylyltransferase.

In the N-terminal section; belongs to the carbohydrate kinase PfkB family. This sequence in the C-terminal section; belongs to the cytidylyltransferase family. Homodimer.

It catalyses the reaction D-glycero-beta-D-manno-heptose 7-phosphate + ATP = D-glycero-beta-D-manno-heptose 1,7-bisphosphate + ADP + H(+). It carries out the reaction D-glycero-beta-D-manno-heptose 1-phosphate + ATP + H(+) = ADP-D-glycero-beta-D-manno-heptose + diphosphate. Its pathway is nucleotide-sugar biosynthesis; ADP-L-glycero-beta-D-manno-heptose biosynthesis; ADP-L-glycero-beta-D-manno-heptose from D-glycero-beta-D-manno-heptose 7-phosphate: step 1/4. It functions in the pathway nucleotide-sugar biosynthesis; ADP-L-glycero-beta-D-manno-heptose biosynthesis; ADP-L-glycero-beta-D-manno-heptose from D-glycero-beta-D-manno-heptose 7-phosphate: step 3/4. In terms of biological role, catalyzes the phosphorylation of D-glycero-D-manno-heptose 7-phosphate at the C-1 position to selectively form D-glycero-beta-D-manno-heptose-1,7-bisphosphate. Its function is as follows. Catalyzes the ADP transfer from ATP to D-glycero-beta-D-manno-heptose 1-phosphate, yielding ADP-D-glycero-beta-D-manno-heptose. The protein is Bifunctional protein HldE of Escherichia coli O17:K52:H18 (strain UMN026 / ExPEC).